Consider the following 199-residue polypeptide: Dephospho-CoA kinase (199 aa).

The 197-residue stretch at 3 to 199 folds into the DPCK domain; the sequence is KVGLTGGICS…DLLEFFTLYQ (197 aa). An ATP-binding site is contributed by 11 to 16; the sequence is CSGKST.

Belongs to the CoaE family.

The protein resides in the cytoplasm. It catalyses the reaction 3'-dephospho-CoA + ATP = ADP + CoA + H(+). The protein operates within cofactor biosynthesis; coenzyme A biosynthesis; CoA from (R)-pantothenate: step 5/5. Functionally, catalyzes the phosphorylation of the 3'-hydroxyl group of dephosphocoenzyme A to form coenzyme A. This is Dephospho-CoA kinase from Clostridium perfringens (strain 13 / Type A).